Consider the following 263-residue polypeptide: Small ribosomal subunit protein uS2 (263 aa).

Residues 223 to 249 show a composition bias toward basic and acidic residues; it reads KALREQDGEALANEEKEITDEEKKEVL. The interval 223-263 is disordered; sequence KALREQDGEALANEEKEITDEEKKEVLDEAMSEEDFGEEQE. Over residues 250-263 the composition is skewed to acidic residues; the sequence is DEAMSEEDFGEEQE.

This sequence belongs to the universal ribosomal protein uS2 family.

The sequence is that of Small ribosomal subunit protein uS2 from Campylobacter jejuni subsp. jejuni serotype O:6 (strain 81116 / NCTC 11828).